Here is a 1080-residue protein sequence, read N- to C-terminus: Serine/threonine-protein kinase KIC1 (1080 aa).

One can recognise a Protein kinase domain in the interval 23–276 (FKRTEVIGRG…ADDLLKSKFI (254 aa)). ATP-binding positions include 29–37 (IGRGKFGVV) and Lys-52. The Proton acceptor role is filled by Asp-144. Disordered stretches follow at residues 308–347 (EGSI…EIKR), 615–760 (KARS…LAPP), 787–831 (STLN…LQMP), and 901–956 (SQSI…NTGN). The segment covering 312-326 (PENEPSKPSEAPKPS) has biased composition (low complexity). Residues 615–626 (KARSSTVTAGTP) are compositionally biased toward polar residues. The segment covering 627-638 (SSSSSIQYKSPS) has biased composition (low complexity). Residues 656-673 (STITNQKLGSAVASNSGI) are compositionally biased toward polar residues. Positions 674 to 689 (SSTPNNSNNYNNNTDS) are enriched in low complexity. Residues 693–726 (RGSSGSNTANSTQMGITNPGNVTKLSTHKASSPS) are compositionally biased toward polar residues. A Phosphoserine modification is found at Ser-735. Polar residues predominate over residues 743–756 (SPTQNIGHNSTHTN). Low complexity predominate over residues 787–807 (STLNTISGNSSNNLTSSNYFS). The span at 808-821 (NEKEGSRVNGDFKR) shows a compositional bias: basic and acidic residues. Residues 901-913 (SQSISNRKNSSAS) show a composition bias toward polar residues. The span at 918–956 (NILGSSVSGNVSGIGNNNVGSNNNSGPNNSVPLSANTGN) shows a compositional bias: low complexity.

Belongs to the protein kinase superfamily. Ser/Thr protein kinase family. As to quaternary structure, interacts with CDC31.

The catalysed reaction is L-seryl-[protein] + ATP = O-phospho-L-seryl-[protein] + ADP + H(+). It carries out the reaction L-threonyl-[protein] + ATP = O-phospho-L-threonyl-[protein] + ADP + H(+). Functionally, protein kinase involved in morphogenesis and cell integrity. This chain is Serine/threonine-protein kinase KIC1 (KIC1), found in Saccharomyces cerevisiae (strain ATCC 204508 / S288c) (Baker's yeast).